Consider the following 207-residue polypeptide: High frequency lysogenization protein HflD homolog (207 aa).

It belongs to the HflD family.

It localises to the cytoplasm. Its subcellular location is the cell inner membrane. The polypeptide is High frequency lysogenization protein HflD homolog (Tolumonas auensis (strain DSM 9187 / NBRC 110442 / TA 4)).